Consider the following 96-residue polypeptide: Aspartyl/glutamyl-tRNA(Asn/Gln) amidotransferase subunit C (96 aa).

The protein belongs to the GatC family. As to quaternary structure, heterotrimer of A, B and C subunits.

It carries out the reaction L-glutamyl-tRNA(Gln) + L-glutamine + ATP + H2O = L-glutaminyl-tRNA(Gln) + L-glutamate + ADP + phosphate + H(+). It catalyses the reaction L-aspartyl-tRNA(Asn) + L-glutamine + ATP + H2O = L-asparaginyl-tRNA(Asn) + L-glutamate + ADP + phosphate + 2 H(+). Its function is as follows. Allows the formation of correctly charged Asn-tRNA(Asn) or Gln-tRNA(Gln) through the transamidation of misacylated Asp-tRNA(Asn) or Glu-tRNA(Gln) in organisms which lack either or both of asparaginyl-tRNA or glutaminyl-tRNA synthetases. The reaction takes place in the presence of glutamine and ATP through an activated phospho-Asp-tRNA(Asn) or phospho-Glu-tRNA(Gln). This is Aspartyl/glutamyl-tRNA(Asn/Gln) amidotransferase subunit C from Bacillus anthracis (strain A0248).